The following is a 468-amino-acid chain: Na(+)/H(+) antiporter NhaA 2 (468 aa).

The next 11 membrane-spanning stretches (helical) occupy residues 31–51, 82–102, 118–138, 147–167, 176–196, 199–219, 226–246, 321–341, 353–373, 393–413, and 422–442; these read FLHV…VALA, LHFW…GLEI, VLPV…YLAL, GWGV…ALLG, VLLL…IAVF, SSIS…VLAL, SPVV…SAGV, PWVA…VSLG, LLLG…MVAC, VLVV…VAGL, and GVAK…AMAV.

This sequence belongs to the NhaA Na(+)/H(+) (TC 2.A.33) antiporter family.

The protein localises to the cell inner membrane. The catalysed reaction is Na(+)(in) + 2 H(+)(out) = Na(+)(out) + 2 H(+)(in). Functionally, na(+)/H(+) antiporter that extrudes sodium in exchange for external protons. This is Na(+)/H(+) antiporter NhaA 2 from Sorangium cellulosum (strain So ce56) (Polyangium cellulosum (strain So ce56)).